Consider the following 30-residue polypeptide: Cycloviolacin-O24 (30 aa).

The cyclopeptide (Gly-Asn) cross-link spans 1 to 30 (GLPTCGETCFGGTCNTPGCTCDPWPVCTHN). 3 disulfide bridges follow: C5-C19, C9-C21, and C14-C27.

This is a cyclic peptide. In terms of tissue distribution, expressed in leaves but not in petals, petioles, roots and runners (at protein level).

Its function is as follows. Probably participates in a plant defense mechanism. Has hemolytic activity. In Viola odorata (Sweet violet), this protein is Cycloviolacin-O24.